The chain runs to 756 residues: Glutathione biosynthesis bifunctional protein GshAB (756 aa).

The glutamate--cysteine ligase stretch occupies residues 1–338; it reads MNYRELMQKK…TGDIFNEQVA (338 aa). In terms of domain architecture, ATP-grasp spans 493-751; the sequence is KKILSAAGFH…LTMDVLKLLY (259 aa). Position 520–578 (520–578) interacts with ATP; that stretch reads LRYANKAFVVKPKSTNYGLGITIFKEGASLEDFTEALRIAFKEDTAVLIEEFLPGTEYR. 3 residues coordinate Mg(2+): aspartate 700, glutamate 721, and asparagine 723. Aspartate 700, glutamate 721, and asparagine 723 together coordinate Mn(2+).

The protein in the N-terminal section; belongs to the glutamate--cysteine ligase type 1 family. Type 2 subfamily. Monomer. Mg(2+) serves as cofactor. It depends on Mn(2+) as a cofactor.

It carries out the reaction L-cysteine + L-glutamate + ATP = gamma-L-glutamyl-L-cysteine + ADP + phosphate + H(+). It catalyses the reaction gamma-L-glutamyl-L-cysteine + glycine + ATP = glutathione + ADP + phosphate + H(+). The protein operates within sulfur metabolism; glutathione biosynthesis; glutathione from L-cysteine and L-glutamate: step 1/2. Its pathway is sulfur metabolism; glutathione biosynthesis; glutathione from L-cysteine and L-glutamate: step 2/2. Its function is as follows. Synthesizes glutathione from L-glutamate and L-cysteine via gamma-L-glutamyl-L-cysteine. In Enterococcus faecalis (strain ATCC 700802 / V583), this protein is Glutathione biosynthesis bifunctional protein GshAB.